Consider the following 344-residue polypeptide: Cinnamoyl-CoA reductase 1 (344 aa).

Phosphoserine is present on S7. NADP(+)-binding positions include 17–23 (GAGGYIA), R42, K48, 68–69 (DL), 88–90 (TAS), Y161, K165, 188–191 (PVLV), and S203. C154 and C162 are oxidised to a cystine. The active-site Proton donor is K165. The interval 317 to 344 (QEKGHLAPPPPPPSASQESVENGIKIGS) is disordered.

This sequence belongs to the NAD(P)-dependent epimerase/dehydratase family. Dihydroflavonol-4-reductase subfamily. Expressed in leaves, stems and flowers.

The enzyme catalyses (E)-cinnamaldehyde + NADP(+) + CoA = (E)-cinnamoyl-CoA + NADPH + H(+). The protein operates within aromatic compound metabolism; phenylpropanoid biosynthesis. In terms of biological role, involved in the latter stages of lignin biosynthesis. Catalyzes one of the last steps of monolignol biosynthesis, the conversion of cinnamoyl-CoAs into their corresponding cinnamaldehydes. This chain is Cinnamoyl-CoA reductase 1, found in Arabidopsis thaliana (Mouse-ear cress).